The sequence spans 185 residues: Elongation factor P (185 aa).

This sequence belongs to the elongation factor P family.

The protein localises to the cytoplasm. Its pathway is protein biosynthesis; polypeptide chain elongation. Its function is as follows. Involved in peptide bond synthesis. Stimulates efficient translation and peptide-bond synthesis on native or reconstituted 70S ribosomes in vitro. Probably functions indirectly by altering the affinity of the ribosome for aminoacyl-tRNA, thus increasing their reactivity as acceptors for peptidyl transferase. This is Elongation factor P from Aromatoleum aromaticum (strain DSM 19018 / LMG 30748 / EbN1) (Azoarcus sp. (strain EbN1)).